Reading from the N-terminus, the 132-residue chain is Phosphoribosyl-AMP cyclohydrolase (132 aa).

Position 78 (Asp78) interacts with Mg(2+). Cys79 provides a ligand contact to Zn(2+). Residues Asp80 and Asp82 each coordinate Mg(2+). Zn(2+) is bound by residues Cys96 and Cys103.

This sequence belongs to the PRA-CH family. As to quaternary structure, homodimer. The cofactor is Mg(2+). Zn(2+) serves as cofactor.

The protein resides in the cytoplasm. It carries out the reaction 1-(5-phospho-beta-D-ribosyl)-5'-AMP + H2O = 1-(5-phospho-beta-D-ribosyl)-5-[(5-phospho-beta-D-ribosylamino)methylideneamino]imidazole-4-carboxamide. It functions in the pathway amino-acid biosynthesis; L-histidine biosynthesis; L-histidine from 5-phospho-alpha-D-ribose 1-diphosphate: step 3/9. Its function is as follows. Catalyzes the hydrolysis of the adenine ring of phosphoribosyl-AMP. The chain is Phosphoribosyl-AMP cyclohydrolase from Nitrosococcus oceani (strain ATCC 19707 / BCRC 17464 / JCM 30415 / NCIMB 11848 / C-107).